The chain runs to 473 residues: GTPase Der (473 aa).

2 EngA-type G domains span residues 3–167 (FTVA…GKDR) and 203–378 (LRVA…RVWN). GTP-binding positions include 9-16 (GRPNVGKS), 56-60 (DTAGL), 119-122 (NKSE), 209-216 (GRPNAGKS), 256-260 (DTAGM), and 321-324 (NKWD). The KH-like domain occupies 379-463 (KRISTARLNR…PIRIHFRSPD (85 aa)).

The protein belongs to the TRAFAC class TrmE-Era-EngA-EngB-Septin-like GTPase superfamily. EngA (Der) GTPase family. As to quaternary structure, associates with the 50S ribosomal subunit.

Functionally, GTPase that plays an essential role in the late steps of ribosome biogenesis. The polypeptide is GTPase Der (Rhizobium etli (strain ATCC 51251 / DSM 11541 / JCM 21823 / NBRC 15573 / CFN 42)).